Consider the following 310-residue polypeptide: Ribose-phosphate pyrophosphokinase (310 aa).

ATP-binding positions include 34 to 36 (DME) and 93 to 94 (RQ). Mg(2+)-binding residues include H127 and D167. The active site involves K190. D-ribose 5-phosphate contacts are provided by residues R192, D216, and 220–224 (DSGGT).

This sequence belongs to the ribose-phosphate pyrophosphokinase family. Class I subfamily. Homohexamer. Mg(2+) serves as cofactor.

The protein resides in the cytoplasm. The enzyme catalyses D-ribose 5-phosphate + ATP = 5-phospho-alpha-D-ribose 1-diphosphate + AMP + H(+). The protein operates within metabolic intermediate biosynthesis; 5-phospho-alpha-D-ribose 1-diphosphate biosynthesis; 5-phospho-alpha-D-ribose 1-diphosphate from D-ribose 5-phosphate (route I): step 1/1. In terms of biological role, involved in the biosynthesis of the central metabolite phospho-alpha-D-ribosyl-1-pyrophosphate (PRPP) via the transfer of pyrophosphoryl group from ATP to 1-hydroxyl of ribose-5-phosphate (Rib-5-P). This chain is Ribose-phosphate pyrophosphokinase, found in Granulibacter bethesdensis (strain ATCC BAA-1260 / CGDNIH1).